A 132-amino-acid polypeptide reads, in one-letter code: Small ribosomal subunit protein uS11 (132 aa).

Belongs to the universal ribosomal protein uS11 family. Part of the 30S ribosomal subunit. Interacts with proteins S7 and S18. Binds to IF-3.

Functionally, located on the platform of the 30S subunit, it bridges several disparate RNA helices of the 16S rRNA. Forms part of the Shine-Dalgarno cleft in the 70S ribosome. The protein is Small ribosomal subunit protein uS11 of Leifsonia xyli subsp. xyli (strain CTCB07).